A 358-amino-acid polypeptide reads, in one-letter code: Phospho-N-acetylmuramoyl-pentapeptide-transferase (358 aa).

Transmembrane regions (helical) follow at residues 13 to 35 (LLIL…IFIG), 81 to 101 (MGGV…NINL), 106 to 126 (LFLL…DDFL), 142 to 162 (FFLQ…KDLI), 171 to 191 (SWQI…LVGI), 201 to 221 (LDGL…TEIL), 228 to 248 (LIIF…FLKY), 268 to 290 (ILGS…GIFI), and 336 to 356 (IVEN…VLKI).

Belongs to the glycosyltransferase 4 family. MraY subfamily. Mg(2+) is required as a cofactor.

The protein localises to the cell inner membrane. The catalysed reaction is UDP-N-acetyl-alpha-D-muramoyl-L-alanyl-gamma-D-glutamyl-meso-2,6-diaminopimeloyl-D-alanyl-D-alanine + di-trans,octa-cis-undecaprenyl phosphate = di-trans,octa-cis-undecaprenyl diphospho-N-acetyl-alpha-D-muramoyl-L-alanyl-D-glutamyl-meso-2,6-diaminopimeloyl-D-alanyl-D-alanine + UMP. It participates in cell wall biogenesis; peptidoglycan biosynthesis. Its function is as follows. Catalyzes the initial step of the lipid cycle reactions in the biosynthesis of the cell wall peptidoglycan: transfers peptidoglycan precursor phospho-MurNAc-pentapeptide from UDP-MurNAc-pentapeptide onto the lipid carrier undecaprenyl phosphate, yielding undecaprenyl-pyrophosphoryl-MurNAc-pentapeptide, known as lipid I. The sequence is that of Phospho-N-acetylmuramoyl-pentapeptide-transferase from Prochlorococcus marinus (strain MIT 9312).